The following is a 324-amino-acid chain: Fructose-1,6-bisphosphatase class 1 (324 aa).

4 residues coordinate Mg(2+): Glu88, Asp107, Leu109, and Asp110. Substrate contacts are provided by residues 110-113 (DGSS), Asn199, and Lys265. Glu271 provides a ligand contact to Mg(2+).

The protein belongs to the FBPase class 1 family. In terms of assembly, homotetramer. Requires Mg(2+) as cofactor.

The protein localises to the cytoplasm. It carries out the reaction beta-D-fructose 1,6-bisphosphate + H2O = beta-D-fructose 6-phosphate + phosphate. It functions in the pathway carbohydrate biosynthesis; gluconeogenesis. This is Fructose-1,6-bisphosphatase class 1 from Neisseria gonorrhoeae (strain ATCC 700825 / FA 1090).